Reading from the N-terminus, the 257-residue chain is Imidazole glycerol phosphate synthase subunit HisF (257 aa).

Active-site residues include aspartate 11 and aspartate 130.

This sequence belongs to the HisA/HisF family. As to quaternary structure, heterodimer of HisH and HisF.

Its subcellular location is the cytoplasm. It carries out the reaction 5-[(5-phospho-1-deoxy-D-ribulos-1-ylimino)methylamino]-1-(5-phospho-beta-D-ribosyl)imidazole-4-carboxamide + L-glutamine = D-erythro-1-(imidazol-4-yl)glycerol 3-phosphate + 5-amino-1-(5-phospho-beta-D-ribosyl)imidazole-4-carboxamide + L-glutamate + H(+). It functions in the pathway amino-acid biosynthesis; L-histidine biosynthesis; L-histidine from 5-phospho-alpha-D-ribose 1-diphosphate: step 5/9. Its function is as follows. IGPS catalyzes the conversion of PRFAR and glutamine to IGP, AICAR and glutamate. The HisF subunit catalyzes the cyclization activity that produces IGP and AICAR from PRFAR using the ammonia provided by the HisH subunit. The chain is Imidazole glycerol phosphate synthase subunit HisF from Bradyrhizobium diazoefficiens (strain JCM 10833 / BCRC 13528 / IAM 13628 / NBRC 14792 / USDA 110).